Reading from the N-terminus, the 706-residue chain is Translation initiation factor IF-2 (706 aa).

The tract at residues 55–117 (KEVNSDSNQE…PTMKDEKGLI (63 aa)) is disordered. A compositionally biased stretch (basic and acidic residues) spans 67–81 (VNTDDKLDKIDKPNK). Over residues 93 to 108 (KNKKSKKKQKNKKKGP) the composition is skewed to basic residues. A tr-type G domain is found at 208 to 375 (SRPPVVTVMG…MILLVSEVEE (168 aa)). A G1 region spans residues 217 to 224 (GHVDHGKT). Residue 217–224 (GHVDHGKT) coordinates GTP. The segment at 242–246 (GITQH) is G2. The interval 263 to 266 (DTPG) is G3. GTP-binding positions include 263–267 (DTPGH) and 317–320 (NKID). Positions 317–320 (NKID) are G4. The tract at residues 353-355 (SAI) is G5.

It belongs to the TRAFAC class translation factor GTPase superfamily. Classic translation factor GTPase family. IF-2 subfamily.

Its subcellular location is the cytoplasm. One of the essential components for the initiation of protein synthesis. Protects formylmethionyl-tRNA from spontaneous hydrolysis and promotes its binding to the 30S ribosomal subunits. Also involved in the hydrolysis of GTP during the formation of the 70S ribosomal complex. The polypeptide is Translation initiation factor IF-2 (Alkaliphilus metalliredigens (strain QYMF)).